The following is a 361-amino-acid chain: Chorismate synthase (361 aa).

Arg-48 and Arg-54 together coordinate NADP(+). FMN-binding positions include Arg-125 to Ser-127, Asn-238 to Ala-239, Gly-278, Lys-293 to Ser-297, and Arg-319.

It belongs to the chorismate synthase family. As to quaternary structure, homotetramer. Requires FMNH2 as cofactor.

The enzyme catalyses 5-O-(1-carboxyvinyl)-3-phosphoshikimate = chorismate + phosphate. It participates in metabolic intermediate biosynthesis; chorismate biosynthesis; chorismate from D-erythrose 4-phosphate and phosphoenolpyruvate: step 7/7. Functionally, catalyzes the anti-1,4-elimination of the C-3 phosphate and the C-6 proR hydrogen from 5-enolpyruvylshikimate-3-phosphate (EPSP) to yield chorismate, which is the branch point compound that serves as the starting substrate for the three terminal pathways of aromatic amino acid biosynthesis. This reaction introduces a second double bond into the aromatic ring system. In Photorhabdus laumondii subsp. laumondii (strain DSM 15139 / CIP 105565 / TT01) (Photorhabdus luminescens subsp. laumondii), this protein is Chorismate synthase.